Consider the following 660-residue polypeptide: Bifunctional polymyxin resistance protein ArnA (660 aa).

A formyltransferase ArnAFT region spans residues 1–304; sequence MKAVIFAYHD…TLGLVAGACL (304 aa). The active-site Proton donor; for formyltransferase activity is the His-104. (6R)-10-formyltetrahydrofolate-binding positions include Arg-114 and 136 to 140; that span reads VKRAD. The dehydrogenase ArnADH stretch occupies residues 314–660; the sequence is RRIRVLILGV…RSVDIAERAS (347 aa). NAD(+)-binding positions include Asp-347 and 368 to 369; that span reads DI. Residues Ala-393, Tyr-398, and 432 to 433 contribute to the UDP-alpha-D-glucuronate site; that span reads TS. Glu-434 acts as the Proton acceptor; for decarboxylase activity in catalysis. UDP-alpha-D-glucuronate is bound by residues Arg-460, Asn-492, 526–535, and Tyr-613; that span reads KLIDGGQQKR. Arg-619 acts as the Proton donor; for decarboxylase activity in catalysis.

This sequence in the N-terminal section; belongs to the Fmt family. UDP-L-Ara4N formyltransferase subfamily. It in the C-terminal section; belongs to the NAD(P)-dependent epimerase/dehydratase family. UDP-glucuronic acid decarboxylase subfamily. Homohexamer, formed by a dimer of trimers.

The catalysed reaction is UDP-alpha-D-glucuronate + NAD(+) = UDP-beta-L-threo-pentopyranos-4-ulose + CO2 + NADH. The enzyme catalyses UDP-4-amino-4-deoxy-beta-L-arabinose + (6R)-10-formyltetrahydrofolate = UDP-4-deoxy-4-formamido-beta-L-arabinose + (6S)-5,6,7,8-tetrahydrofolate + H(+). It functions in the pathway nucleotide-sugar biosynthesis; UDP-4-deoxy-4-formamido-beta-L-arabinose biosynthesis; UDP-4-deoxy-4-formamido-beta-L-arabinose from UDP-alpha-D-glucuronate: step 1/3. The protein operates within nucleotide-sugar biosynthesis; UDP-4-deoxy-4-formamido-beta-L-arabinose biosynthesis; UDP-4-deoxy-4-formamido-beta-L-arabinose from UDP-alpha-D-glucuronate: step 3/3. It participates in bacterial outer membrane biogenesis; lipopolysaccharide biosynthesis. Bifunctional enzyme that catalyzes the oxidative decarboxylation of UDP-glucuronic acid (UDP-GlcUA) to UDP-4-keto-arabinose (UDP-Ara4O) and the addition of a formyl group to UDP-4-amino-4-deoxy-L-arabinose (UDP-L-Ara4N) to form UDP-L-4-formamido-arabinose (UDP-L-Ara4FN). The modified arabinose is attached to lipid A and is required for resistance to polymyxin and cationic antimicrobial peptides. The protein is Bifunctional polymyxin resistance protein ArnA of Salmonella paratyphi A (strain ATCC 9150 / SARB42).